A 339-amino-acid chain; its full sequence is HTH-type transcriptional regulator KdgR (339 aa).

The 56-residue stretch at 9 to 64 (TTIKDVAECAGVSKSTVSRYINGKIDAISPEKVKNIKKAIAELNYRPSKMAQGLKI) folds into the HTH lacI-type domain. Positions 11-30 (IKDVAECAGVSKSTVSRYIN) form a DNA-binding region, H-T-H motif.

In terms of biological role, transcriptional repressor of the kdgRKAT and kduID operons for pectin utilization. This Bacillus subtilis (strain 168) protein is HTH-type transcriptional regulator KdgR (kdgR).